The following is a 229-amino-acid chain: MLTLNNISKSYKLGKEEVPILKHINLTVQAGEFLAIMGPSGSGKSTLMNIIGCLDRPTSGTYTLDQIDILKGKDGALAEIRNESIGFVFQTFHLLPRLTALQNVELPMIYNKVKKKERRQRAYEALEKVGLKDRVSYKPPKLSGGQKQRVAIARALVNQPRFILADEPTGALDTKSSEQILALFSELHREGKTIIMITHDPDVAKKADRTVFIRDGELVLDERGDISHA.

The region spanning 2-229 (LTLNNISKSY…LDERGDISHA (228 aa)) is the ABC transporter domain. Residue 38-45 (GPSGSGKS) coordinates ATP.

This sequence belongs to the ABC transporter superfamily.

This is an uncharacterized protein from Bacillus subtilis (strain 168).